The following is a 296-amino-acid chain: Glycine--tRNA ligase alpha subunit (296 aa).

Belongs to the class-II aminoacyl-tRNA synthetase family. As to quaternary structure, tetramer of two alpha and two beta subunits.

Its subcellular location is the cytoplasm. It catalyses the reaction tRNA(Gly) + glycine + ATP = glycyl-tRNA(Gly) + AMP + diphosphate. The sequence is that of Glycine--tRNA ligase alpha subunit from Francisella tularensis subsp. novicida (strain U112).